A 262-amino-acid chain; its full sequence is MWFSWNNTEQSIAVRQGYQVLAEYQLIEQEQLKNIYAIPSYASALHWFGVIFIHSGFYAGSMFRFSIILPDNFPNGTSLPTIIFTTTCYHPHIRPQTQSLDLAPFFTGWRKDHYHVWHLLKYIQAIFADPEGSISTTVTPSGDRVCLEEAYNMDALAMLSNDRVAFIKKVQELALFTKKHMYDKPTSNDPHYIVIEPFCSERHTKIMEQLKSPSWKEATSMDTSPPAQCLARIDSSRQMDEEEAKQSAKLFAKNGKAAAALQ.

Residues 15 to 179 (RQGYQVLAEY…VQELALFTKK (165 aa)) form the UBC core domain.

This sequence belongs to the ubiquitin-conjugating enzyme family. FTS subfamily.

In Drosophila pseudoobscura pseudoobscura (Fruit fly), this protein is Protein crossbronx-like.